Consider the following 576-residue polypeptide: Proline--tRNA ligase (576 aa).

This sequence belongs to the class-II aminoacyl-tRNA synthetase family. ProS type 1 subfamily. Homodimer.

It is found in the cytoplasm. The enzyme catalyses tRNA(Pro) + L-proline + ATP = L-prolyl-tRNA(Pro) + AMP + diphosphate. Catalyzes the attachment of proline to tRNA(Pro) in a two-step reaction: proline is first activated by ATP to form Pro-AMP and then transferred to the acceptor end of tRNA(Pro). As ProRS can inadvertently accommodate and process non-cognate amino acids such as alanine and cysteine, to avoid such errors it has two additional distinct editing activities against alanine. One activity is designated as 'pretransfer' editing and involves the tRNA(Pro)-independent hydrolysis of activated Ala-AMP. The other activity is designated 'posttransfer' editing and involves deacylation of mischarged Ala-tRNA(Pro). The misacylated Cys-tRNA(Pro) is not edited by ProRS. This Leptospira interrogans serogroup Icterohaemorrhagiae serovar Lai (strain 56601) protein is Proline--tRNA ligase.